The sequence spans 121 residues: Large ribosomal subunit protein bL12 (121 aa).

Belongs to the bacterial ribosomal protein bL12 family. As to quaternary structure, homodimer. Part of the ribosomal stalk of the 50S ribosomal subunit. Forms a multimeric L10(L12)X complex, where L10 forms an elongated spine to which 2 to 4 L12 dimers bind in a sequential fashion. Binds GTP-bound translation factors.

In terms of biological role, forms part of the ribosomal stalk which helps the ribosome interact with GTP-bound translation factors. Is thus essential for accurate translation. This chain is Large ribosomal subunit protein bL12, found in Streptococcus agalactiae serotype Ia (strain ATCC 27591 / A909 / CDC SS700).